The chain runs to 128 residues: Sulfurtransferase TusD (128 aa).

Cys78 acts as the Cysteine persulfide intermediate in catalysis.

This sequence belongs to the DsrE/TusD family. In terms of assembly, heterohexamer, formed by a dimer of trimers. The hexameric TusBCD complex contains 2 copies each of TusB, TusC and TusD. The TusBCD complex interacts with TusE.

The protein resides in the cytoplasm. In terms of biological role, part of a sulfur-relay system required for 2-thiolation of 5-methylaminomethyl-2-thiouridine (mnm(5)s(2)U) at tRNA wobble positions. Accepts sulfur from TusA and transfers it in turn to TusE. The sequence is that of Sulfurtransferase TusD from Escherichia coli (strain 55989 / EAEC).